The chain runs to 215 residues: Pyridoxine/pyridoxamine 5'-phosphate oxidase (215 aa).

Substrate contacts are provided by residues 9–12 and K69; that span reads RRDY. Residues 64–69, 79–80, K86, and Q108 contribute to the FMN site; these read RVLLLK and FS. Substrate is bound by residues Y126, R130, and S134. FMN-binding positions include 143 to 144 and W188; that span reads QS. 194 to 196 is a substrate binding site; sequence RLH. R198 provides a ligand contact to FMN.

This sequence belongs to the pyridoxamine 5'-phosphate oxidase family. In terms of assembly, homodimer. FMN is required as a cofactor.

The enzyme catalyses pyridoxamine 5'-phosphate + O2 + H2O = pyridoxal 5'-phosphate + H2O2 + NH4(+). The catalysed reaction is pyridoxine 5'-phosphate + O2 = pyridoxal 5'-phosphate + H2O2. It participates in cofactor metabolism; pyridoxal 5'-phosphate salvage; pyridoxal 5'-phosphate from pyridoxamine 5'-phosphate: step 1/1. The protein operates within cofactor metabolism; pyridoxal 5'-phosphate salvage; pyridoxal 5'-phosphate from pyridoxine 5'-phosphate: step 1/1. Functionally, catalyzes the oxidation of either pyridoxine 5'-phosphate (PNP) or pyridoxamine 5'-phosphate (PMP) into pyridoxal 5'-phosphate (PLP). This chain is Pyridoxine/pyridoxamine 5'-phosphate oxidase, found in Azotobacter vinelandii (strain DJ / ATCC BAA-1303).